Consider the following 656-residue polypeptide: Threonine--tRNA ligase (656 aa).

One can recognise a TGS domain in the interval 2-67 (LMSQITIILP…KDQTKVALVT (66 aa)). The catalytic stretch occupies residues 251–542 (DHRKLGKELG…YLEHTAGHLP (292 aa)). Residues Cys-342, His-393, and His-519 each contribute to the Zn(2+) site.

It belongs to the class-II aminoacyl-tRNA synthetase family. As to quaternary structure, homodimer. Zn(2+) serves as cofactor.

The protein resides in the cytoplasm. It catalyses the reaction tRNA(Thr) + L-threonine + ATP = L-threonyl-tRNA(Thr) + AMP + diphosphate + H(+). Functionally, catalyzes the attachment of threonine to tRNA(Thr) in a two-step reaction: L-threonine is first activated by ATP to form Thr-AMP and then transferred to the acceptor end of tRNA(Thr). Also edits incorrectly charged L-seryl-tRNA(Thr). This Bdellovibrio bacteriovorus (strain ATCC 15356 / DSM 50701 / NCIMB 9529 / HD100) protein is Threonine--tRNA ligase.